A 483-amino-acid polypeptide reads, in one-letter code: GTPase Der (483 aa).

EngA-type G domains lie at phenylalanine 3–arginine 167 and leucine 212–asparagine 387. GTP-binding positions include glycine 9–serine 16, aspartate 56–leucine 60, asparagine 119–glutamate 122, glycine 218–serine 225, aspartate 265–leucine 269, and asparagine 330–aspartate 333. Residues arginine 388–aspartate 472 form the KH-like domain.

It belongs to the TRAFAC class TrmE-Era-EngA-EngB-Septin-like GTPase superfamily. EngA (Der) GTPase family. Associates with the 50S ribosomal subunit.

Functionally, GTPase that plays an essential role in the late steps of ribosome biogenesis. The sequence is that of GTPase Der from Brucella anthropi (strain ATCC 49188 / DSM 6882 / CCUG 24695 / JCM 21032 / LMG 3331 / NBRC 15819 / NCTC 12168 / Alc 37) (Ochrobactrum anthropi).